Consider the following 226-residue polypeptide: Glutathione S-transferase kappa 1 (226 aa).

Glutathione contacts are provided by residues 15–17 (SPY), Asn53, and 199–200 (SD).

It belongs to the GST superfamily. Kappa family.

It carries out the reaction RX + glutathione = an S-substituted glutathione + a halide anion + H(+). The chain is Glutathione S-transferase kappa 1 (gstk-1) from Caenorhabditis elegans.